The primary structure comprises 815 residues: Echinoderm microtubule-associated protein-like 1 (815 aa).

Positions 31 to 72 form a coiled coil; that stretch reads SMEVTDRIASLEQRVQMQEDDIQLLKSALADVVRRLNITEEQ. A disordered region spans residues 77–179; it reads NRKGPTKARP…NSESKPKEPV (103 aa). Residues 92–101 show a composition bias toward polar residues; the sequence is PLRTTVNNGT. Phosphoserine is present on S113. A compositionally biased stretch (polar residues) spans 126 to 138; the sequence is TKSNIKRTSSSER. Residues 143–153 are compositionally biased toward basic and acidic residues; it reads GRRESNGDSRG. Over residues 156–168 the composition is skewed to low complexity; sequence NRTGSTSSSSSGK. Positions 176-815 are tandem atypical propeller in EMLs; sequence KEPVFSAEEG…DTSIMQWRVI (640 aa). 12 WD repeats span residues 261–310, 315–358, 363–400, 409–446, 450–489, 493–530, 535–572, 578–613, 617–655, 664–701, 709–768, and 775–814; these read EQLQ…IWDS, TLHV…VWDW, KLADVKCSNEAVFAADFHPTDTNIIVTCGKSHLYFWTL, QGLFEKQEKPKFVLCVTFSENGDTITGDSSGNILVWGK, RISYAVQGAHEGGIFALCMLRDGTLVSGGGKDRKLISWSG, KLRKTEIPEQFGPIRTVAEGKGDVILIGTTRNFVLQGT, FTPITQGHTDELWGLAIHASKSQFLTCGHDKHATLWDA, VWDKIIEDPAQSSGFHPSGSVVAVGTLTGRWFVFDT, DLVTVHTDGNEQLSVMRYSPDGNFLAIGSHDNCIYIYGV, RVGKCSGHSSFITHLDWSVNSQFLVSNSGDYEILYWVP, SVET…LFSY, and APSHIYGGHSSHVTNVDFLCEDSHLISTGGKDTSIMQWRV.

The protein belongs to the WD repeat EMAP family. In terms of assembly, homotrimer; self-association is mediated by the N-terminal coiled coil. Does not interact with EML3. Binds repolymerizing microtubules. Binds unpolymerized tubulins via its WD repeat region. Interacts with TASOR. As to expression, ubiquitous; expressed in most tissues with the exception of thymus and peripheral blood lymphocytes.

The protein resides in the cytoplasm. The protein localises to the perinuclear region. It localises to the cytoskeleton. In terms of biological role, modulates the assembly and organization of the microtubule cytoskeleton, and probably plays a role in regulating the orientation of the mitotic spindle and the orientation of the plane of cell division. Required for normal proliferation of neuronal progenitor cells in the developing brain and for normal brain development. Does not affect neuron migration per se. The chain is Echinoderm microtubule-associated protein-like 1 (EML1) from Homo sapiens (Human).